A 185-amino-acid chain; its full sequence is Ribosome-recycling factor (185 aa).

A disordered region spans residues 140 to 166 (KRQEKDGDITEDEQRSLEKQVQKVTDD).

This sequence belongs to the RRF family.

Its subcellular location is the cytoplasm. In terms of biological role, responsible for the release of ribosomes from messenger RNA at the termination of protein biosynthesis. May increase the efficiency of translation by recycling ribosomes from one round of translation to another. This chain is Ribosome-recycling factor, found in Lactobacillus johnsonii (strain CNCM I-12250 / La1 / NCC 533).